The primary structure comprises 178 residues: Large ribosomal subunit protein uL6 (178 aa).

The protein belongs to the universal ribosomal protein uL6 family. Part of the 50S ribosomal subunit.

In terms of biological role, this protein binds to the 23S rRNA, and is important in its secondary structure. It is located near the subunit interface in the base of the L7/L12 stalk, and near the tRNA binding site of the peptidyltransferase center. This Staphylococcus saprophyticus subsp. saprophyticus (strain ATCC 15305 / DSM 20229 / NCIMB 8711 / NCTC 7292 / S-41) protein is Large ribosomal subunit protein uL6.